A 389-amino-acid chain; its full sequence is Formate-dependent phosphoribosylglycinamide formyltransferase (389 aa).

Residues 12 to 13 (EL) and Glu-72 each bind N(1)-(5-phospho-beta-D-ribosyl)glycinamide. ATP is bound by residues Arg-104, Lys-145, 150 to 155 (SSGKGQ), 185 to 188 (EAFV), and Glu-193. Positions 109 to 300 (DLASKELGLR…EFELHARAVL (192 aa)) constitute an ATP-grasp domain. Mg(2+) is bound by residues Glu-258 and Glu-270. N(1)-(5-phospho-beta-D-ribosyl)glycinamide-binding positions include Asp-277, Lys-348, and 355 to 356 (RR).

Belongs to the PurK/PurT family. In terms of assembly, homodimer.

The enzyme catalyses N(1)-(5-phospho-beta-D-ribosyl)glycinamide + formate + ATP = N(2)-formyl-N(1)-(5-phospho-beta-D-ribosyl)glycinamide + ADP + phosphate + H(+). Its pathway is purine metabolism; IMP biosynthesis via de novo pathway; N(2)-formyl-N(1)-(5-phospho-D-ribosyl)glycinamide from N(1)-(5-phospho-D-ribosyl)glycinamide (formate route): step 1/1. In terms of biological role, involved in the de novo purine biosynthesis. Catalyzes the transfer of formate to 5-phospho-ribosyl-glycinamide (GAR), producing 5-phospho-ribosyl-N-formylglycinamide (FGAR). Formate is provided by PurU via hydrolysis of 10-formyl-tetrahydrofolate. This is Formate-dependent phosphoribosylglycinamide formyltransferase from Chlorobium phaeobacteroides (strain DSM 266 / SMG 266 / 2430).